The following is a 456-amino-acid chain: MPYIPHTPNDTKEMLTAVGAQDIQDLFDEIPASLQYAGFQSIPAGINEMEMLKEAQNQAQKNRNGICFIGAGCYEHHIPAAVWDIASRGEFLTAYTPYQAEASQGTLQLLYEYQTMICELTGMEVSNASMYDGATALAEAVLMAVRLNKHSKTNRVLITGTVHPFYRETIETIVRNQHIEVITLPFDEQQGITDFGSLNQYTGEDITALVIAQPNFFGCLEQVDKMTSWAHHNKTISVACVNPTSLALLKPPCSWGEHGVEIVCGEGQPLGSPMASGGPYFGFLSTRMAHVRQMPGRIIGRTVDKDGKTGFSLTLQAREQHIRRAKATSNICTNQGLLVTAATIYMSLLGPEGLSQVATQCHQNTHELITALTQIEGVELAFKAPFFHEALIKLNQPVQSVLQQLADAGIAGGYAPEQHYPQLANTLLVCATEVRSAEDIAKYAKTLKTIMSKRGA.

The protein belongs to the GcvP family. N-terminal subunit subfamily. The glycine cleavage system is composed of four proteins: P, T, L and H. In this organism, the P 'protein' is a heterodimer of two subunits.

It catalyses the reaction N(6)-[(R)-lipoyl]-L-lysyl-[glycine-cleavage complex H protein] + glycine + H(+) = N(6)-[(R)-S(8)-aminomethyldihydrolipoyl]-L-lysyl-[glycine-cleavage complex H protein] + CO2. The glycine cleavage system catalyzes the degradation of glycine. The P protein binds the alpha-amino group of glycine through its pyridoxal phosphate cofactor; CO(2) is released and the remaining methylamine moiety is then transferred to the lipoamide cofactor of the H protein. This chain is Probable glycine dehydrogenase (decarboxylating) subunit 1, found in Legionella pneumophila (strain Paris).